Here is a 618-residue protein sequence, read N- to C-terminus: Keratin, type I cytoskeletal 9 (618 aa).

The segment at methionine 1–serine 49 is disordered. A head region spans residues methionine 1–asparagine 137. Over residues serine 7–serine 16 the composition is skewed to low complexity. Residues serine 14 and serine 17 each carry the phosphoserine modification. Over residues serine 17–alanine 26 the composition is skewed to gly residues. The segment covering serine 27–serine 49 has biased composition (low complexity). A coil 1A region spans residues glutamate 138–tryptophan 173. The 313-residue stretch at glutamate 138–phenylalanine 450 folds into the IF rod domain. The interval tyrosine 174–threonine 192 is linker 1. Positions isoleucine 193–leucine 284 are coil 1B. The tract at residues threonine 285–valine 307 is linker 12. Residues leucine 308–glycine 446 are coil 2. Positions glutamine 447 to serine 609 are tail. The disordered stretch occupies residues aspartate 449–arginine 618. Over residues glycine 456–asparagine 603 the composition is skewed to gly residues. A compositionally biased stretch (low complexity) spans serine 607–arginine 618.

The protein belongs to the intermediate filament family. As to quaternary structure, heterotetramer of two type I and two type II keratins. Expressed in the perinuclear ring of spermatid manchettes within testis and in keratinocytes of the suprabasal layer of footpad epidermis (at protein level).

In terms of biological role, may serve an important special function either in the mature palmar and plantar skin tissue or in the morphogenetic program of the formation of these tissues. Plays a role in keratin filament assembly. May be involved in spermatid nuclear shaping and sperm development. In Rattus norvegicus (Rat), this protein is Keratin, type I cytoskeletal 9 (Krt9).